We begin with the raw amino-acid sequence, 138 residues long: UPF0047 protein MJ1081 (138 aa).

Belongs to the UPF0047 family.

This Methanocaldococcus jannaschii (strain ATCC 43067 / DSM 2661 / JAL-1 / JCM 10045 / NBRC 100440) (Methanococcus jannaschii) protein is UPF0047 protein MJ1081.